A 365-amino-acid chain; its full sequence is UBX domain-containing protein 2B (365 aa).

Residues 1-97 (MADGGASPAQ…MSDDKENQRF (97 aa)) are disordered. Composition is skewed to basic and acidic residues over residues 50–63 (DEAK…DKPT) and 73–95 (LKID…KENQ). The SEP domain maps to 175–240 (DVQILLKLWR…MEDHQEQEYV (66 aa)). The UBX domain occupies 286-363 (DSVPATKIQI…DILNTVILQQ (78 aa)).

Belongs to the NSFL1C family.

It is found in the nucleus. The protein resides in the cytoplasm. It localises to the cytosol. Its subcellular location is the endoplasmic reticulum. The protein localises to the golgi apparatus. It is found in the cytoskeleton. The protein resides in the microtubule organizing center. It localises to the centrosome. Its function is as follows. Adapter protein required for Golgi and endoplasmic reticulum biogenesis. Involved in Golgi and endoplasmic reticulum maintenance during interphase and in their reassembly at the end of mitosis. Regulates the centrosomal levels of kinase AURKA/Aurora A during mitotic progression by promoting AURKA removal from centrosomes in prophase. Also, regulates spindle orientation during mitosis. This chain is UBX domain-containing protein 2B (UBXN2B), found in Gallus gallus (Chicken).